The sequence spans 308 residues: Ornithine carbamoyltransferase (308 aa).

Carbamoyl phosphate is bound by residues 55-58 (STRT), Gln82, Arg106, and 133-136 (HPCQ). L-ornithine-binding positions include Asn164, Asp227, and 231-232 (SM). Residues 267-268 (CL) and Arg295 each bind carbamoyl phosphate.

The protein belongs to the aspartate/ornithine carbamoyltransferase superfamily. OTCase family.

The protein resides in the cytoplasm. The catalysed reaction is carbamoyl phosphate + L-ornithine = L-citrulline + phosphate + H(+). Its pathway is amino-acid biosynthesis; L-arginine biosynthesis; L-arginine from L-ornithine and carbamoyl phosphate: step 1/3. In terms of biological role, reversibly catalyzes the transfer of the carbamoyl group from carbamoyl phosphate (CP) to the N(epsilon) atom of ornithine (ORN) to produce L-citrulline. In Prochlorococcus marinus (strain MIT 9312), this protein is Ornithine carbamoyltransferase.